Reading from the N-terminus, the 296-residue chain is Myozenin-1 (296 aa).

Position 82 is a phosphoserine (Ser82). Composition is skewed to gly residues over residues Phe105 to Gly117 and Ser134 to Gly170. The segment at Phe105–Gly172 is disordered.

Belongs to the myozenin family. In terms of assembly, interacts with ACTN2, ACTN3, FLNA, FLNB, FLNC, LDB3, PPP3CA and TCAP. Interacts via its C-terminal region with MYOT. As to expression, expressed primarily in skeletal muscle and specifically enriched in the gastrocnemius, which is composed predominantly of fast-twitch muscle fibers. Detected at lower levels in heart.

Its subcellular location is the nucleus. The protein resides in the cell projection. It is found in the pseudopodium. Myozenins may serve as intracellular binding proteins involved in linking Z-disk proteins such as alpha-actinin, gamma-filamin, TCAP/telethonin, LDB3/ZASP and localizing calcineurin signaling to the sarcomere. Plays an important role in the modulation of calcineurin signaling. May play a role in myofibrillogenesis. The sequence is that of Myozenin-1 from Mus musculus (Mouse).